A 195-amino-acid chain; its full sequence is uncharacterized protein (195 aa).

2 disordered regions span residues 1-51 and 160-195; these read MTHN…GPSY and SYSQQQEPQHYYKKHKHHSHHRPKHVKSSRSCKSCN. Over residues 13-28 the composition is skewed to polar residues; it reads SYQNQAPQPQYYTRQP. Residues 170 to 189 show a composition bias toward basic residues; that stretch reads YYKKHKHHSHHRPKHVKSSR.

This is an uncharacterized protein from Acanthamoeba polyphaga mimivirus (APMV).